We begin with the raw amino-acid sequence, 100 residues long: Urease subunit gamma (100 aa).

The protein belongs to the urease gamma subunit family. Heterotrimer of UreA (gamma), UreB (beta) and UreC (alpha) subunits. Three heterotrimers associate to form the active enzyme.

The protein resides in the cytoplasm. It catalyses the reaction urea + 2 H2O + H(+) = hydrogencarbonate + 2 NH4(+). It functions in the pathway nitrogen metabolism; urea degradation; CO(2) and NH(3) from urea (urease route): step 1/1. The sequence is that of Urease subunit gamma from Mycolicibacterium smegmatis (strain ATCC 700084 / mc(2)155) (Mycobacterium smegmatis).